We begin with the raw amino-acid sequence, 180 residues long: NADH-quinone oxidoreductase subunit I (180 aa).

2 4Fe-4S ferredoxin-type domains span residues isoleucine 48–alanine 80 and glutamate 90–aspartate 119. Residues cysteine 60, cysteine 63, cysteine 66, cysteine 70, cysteine 99, cysteine 102, cysteine 105, and cysteine 109 each contribute to the [4Fe-4S] cluster site. The interval glycine 160–proline 180 is disordered.

Belongs to the complex I 23 kDa subunit family. NDH-1 is composed of 14 different subunits. Subunits NuoA, H, J, K, L, M, N constitute the membrane sector of the complex. It depends on [4Fe-4S] cluster as a cofactor.

The protein localises to the cell inner membrane. It catalyses the reaction a quinone + NADH + 5 H(+)(in) = a quinol + NAD(+) + 4 H(+)(out). Functionally, NDH-1 shuttles electrons from NADH, via FMN and iron-sulfur (Fe-S) centers, to quinones in the respiratory chain. The immediate electron acceptor for the enzyme in this species is believed to be ubiquinone. Couples the redox reaction to proton translocation (for every two electrons transferred, four hydrogen ions are translocated across the cytoplasmic membrane), and thus conserves the redox energy in a proton gradient. The sequence is that of NADH-quinone oxidoreductase subunit I from Tolumonas auensis (strain DSM 9187 / NBRC 110442 / TA 4).